The following is an 81-amino-acid chain: Omega-conotoxin-like 3 (81 aa).

A signal peptide spans 1 to 22 (MKLTCMMIVAVLFLTASIFITA). A propeptide spanning residues 23 to 51 (DNSRNGIENLPRMRRHEMKKPKASKLNKR) is cleaved from the precursor. 3 disulfides stabilise this stretch: Cys-53/Cys-71, Cys-60/Cys-75, and Cys-70/Cys-79.

The protein belongs to the conotoxin O1 superfamily. Expressed by the venom duct.

It localises to the secreted. In terms of biological role, omega-conotoxins act at presynaptic membranes, they bind and block voltage-gated calcium channels (Cav). This is Omega-conotoxin-like 3 from Conus imperialis (Imperial cone).